We begin with the raw amino-acid sequence, 846 residues long: Matrin-3 (846 aa).

Ser2 carries the N-acetylserine modification. Lys3 is modified (N6-acetyllysine; alternate). Lys3 participates in a covalent cross-link: Glycyl lysine isopeptide (Lys-Gly) (interchain with G-Cter in SUMO2); alternate. Residues Ser4, Ser9, Ser14, Ser22, Ser41, Ser118, and Ser126 each carry the phosphoserine modification. Glycyl lysine isopeptide (Lys-Gly) (interchain with G-Cter in SUMO2) cross-links involve residues Lys132 and Lys146. Disordered regions lie at residues 147–174 (RRRTEEGPTLSYGRDGRSATREPPYRVP) and 187–213 (DSFDDRGPSLNPVLDYDHGSRSQESGY). Position 150 is a phosphothreonine (Thr150). Phosphoserine is present on Ser157. At Tyr158 the chain carries Phosphotyrosine. Over residues 160-174 (RDGRSATREPPYRVP) the composition is skewed to basic and acidic residues. 3 positions are modified to phosphoserine: Ser164, Ser188, and Ser195. The segment covering 201 to 213 (DYDHGSRSQESGY) has biased composition (basic and acidic residues). The residue at position 202 (Tyr202) is a Phosphotyrosine. Phosphoserine occurs at positions 206, 208, and 211. Position 219 is a phosphotyrosine (Tyr219). Phosphoserine is present on Ser234. Lys245 participates in a covalent cross-link: Glycyl lysine isopeptide (Lys-Gly) (interchain with G-Cter in SUMO2). Residue Ser264 is modified to Phosphoserine. A Glycyl lysine isopeptide (Lys-Gly) (interchain with G-Cter in SUMO2) cross-link involves residue Lys269. The residue at position 275 (Ser275) is a Phosphoserine. The disordered stretch occupies residues 342 to 394 (PFMLQQSTNPAPGILGPPPPSFHLGGPAVGPRGNLGAGNGNLQGPRHMQKGRV). In terms of domain architecture, RRM 1 spans 398–473 (RVVHIMDFQR…KPVRVHLSQK (76 aa)). Glycyl lysine isopeptide (Lys-Gly) (interchain with G-Cter in SUMO2) cross-links involve residues Lys478, Lys487, and Lys491. An RRM 2 domain is found at 496-571 (RVIHLSNLPH…RCVKVDLSEK (76 aa)). Ser509 and Ser511 each carry phosphoserine. Lys515 is covalently cross-linked (Glycyl lysine isopeptide (Lys-Gly) (interchain with G-Cter in SUMO2)). The residue at position 522 (Lys522) is an N6-acetyllysine; alternate. Lys522 participates in a covalent cross-link: Glycyl lysine isopeptide (Lys-Gly) (interchain with G-Cter in SUMO2); alternate. Phosphoserine is present on Ser533. Residues Lys554 and Lys555 each participate in a glycyl lysine isopeptide (Lys-Gly) (interchain with G-Cter in SUMO2) cross-link. Lys571 bears the N6-acetyllysine mark. A disordered region spans residues 588–779 (KKDKSRKRSY…EDYTIPDEYR (192 aa)). Ser596, Ser598, Ser604, and Ser606 each carry phosphoserine. A compositionally biased stretch (basic and acidic residues) spans 600–642 (DGKESPSDKKSKTDAQKTESPAEGKEQEEKSGEDGEKDTKDDQ). Residues Lys616 and Lys629 each participate in a glycyl lysine isopeptide (Lys-Gly) (interchain with G-Cter in SUMO2) cross-link. The segment covering 652–664 (ESEDELLVDEEEA) has biased composition (acidic residues). Phosphoserine occurs at positions 653, 670, 672, and 673. The span at 665-675 (AALLESGSSVG) shows a compositional bias: low complexity. Position 678 is a phosphothreonine (Thr678). Ser688 is subject to Phosphoserine. The segment covering 688–703 (SDGKKEPSDKAVKKDP) has biased composition (basic and acidic residues). Residues 709-717 (SKKKLKKVD) carry the Nuclear localization signal motif. Residues Lys718 and Lys735 each participate in a glycyl lysine isopeptide (Lys-Gly) (interchain with G-Cter in SUMO2) cross-link. Thr740 carries the phosphothreonine modification. Residues Ser746 and Ser758 each carry the phosphoserine modification. Positions 766–779 (DENKEDYTIPDEYR) are enriched in basic and acidic residues. Lys769 participates in a covalent cross-link: Glycyl lysine isopeptide (Lys-Gly) (interchain with G-Cter in SUMO2). The Matrin-type zinc-finger motif lies at 800–831 (FYCKLCSLFYTNEEVAKNTHCSSLPHYQKLKK). Lys835 carries the post-translational modification N6-acetyllysine; alternate. A Glycyl lysine isopeptide (Lys-Gly) (interchain with G-Cter in SUMO2); alternate cross-link involves residue Lys835.

In terms of assembly, part of a complex consisting of SFPQ, NONO and MATR3. Interacts with AGO1 and AGO2. Part of a complex composed at least of ASH2L, EMSY, HCFC1, HSPA8, CCAR2, MATR3, MKI67, RBBP5, TUBB2A, WDR5 and ZNF335; this complex may have a histone H3-specific methyltransferase activity. Interacts with TARDBP. Part of the HDP-RNP complex composed of at least HEXIM1, PRKDC, XRCC5, XRCC6, paraspeckle proteins (SFPQ, NONO, PSPC1, RBM14, and MATR3) and NEAT1 RNA. Interacts with FUS. Interacts with IGF2BP1. Interacts with IGF2BP2 and IGF2BP3. Interacts with RBPMS.

The protein resides in the nucleus matrix. Its function is as follows. May play a role in transcription or may interact with other nuclear matrix proteins to form the internal fibrogranular network. In association with the SFPQ-NONO heteromer may play a role in nuclear retention of defective RNAs. Plays a role in the regulation of DNA virus-mediated innate immune response by assembling into the HDP-RNP complex, a complex that serves as a platform for IRF3 phosphorylation and subsequent innate immune response activation through the cGAS-STING pathway. Binds to N6-methyladenosine (m6A)-containing mRNAs and contributes to MYC stability by binding to m6A-containing MYC mRNAs. May bind to specific miRNA hairpins. This is Matrin-3 (Matr3) from Mus musculus (Mouse).